We begin with the raw amino-acid sequence, 221 residues long: Late embryogenesis abundant protein, group 3 (221 aa).

The tract at residues 1-221 (MASHQDKASY…KDSSTITRDH (221 aa)) is disordered. A compositionally biased stretch (basic and acidic residues) spans 33-42 (TAQHAKDRAA). A compositionally biased stretch (low complexity) spans 43–52 (DAAGHAAGKG). Composition is skewed to basic and acidic residues over residues 53-63 (QDAKEATKQKA) and 72-147 (KKTD…KQKA). Over residues 212-221 (KDSSTITRDH) the composition is skewed to polar residues.

Belongs to the LEA type 4 family.

This chain is Late embryogenesis abundant protein, group 3 (MGL3), found in Zea mays (Maize).